A 216-amino-acid chain; its full sequence is Small ribosomal subunit protein uS5 (216 aa).

Residues 1–55 (MDRKLENQKDLLNQDPKVELNSQSVAKNPLNSREVKPIQRRRPLRKNSRDKNSKP) form a disordered region. The segment covering 20–31 (LNSQSVAKNPLN) has biased composition (polar residues). Residues 57–120 (FEERVIAIHR…KDAQNRLVSV (64 aa)) enclose the S5 DRBM domain.

This sequence belongs to the universal ribosomal protein uS5 family. In terms of assembly, part of the 30S ribosomal subunit. Contacts proteins S4 and S8.

Functionally, with S4 and S12 plays an important role in translational accuracy. In terms of biological role, located at the back of the 30S subunit body where it stabilizes the conformation of the head with respect to the body. This is Small ribosomal subunit protein uS5 from Mesomycoplasma hyopneumoniae (strain J / ATCC 25934 / NCTC 10110) (Mycoplasma hyopneumoniae).